The sequence spans 258 residues: 3-deoxy-manno-octulosonate cytidylyltransferase (258 aa).

Belongs to the KdsB family.

Its subcellular location is the cytoplasm. It carries out the reaction 3-deoxy-alpha-D-manno-oct-2-ulosonate + CTP = CMP-3-deoxy-beta-D-manno-octulosonate + diphosphate. It participates in nucleotide-sugar biosynthesis; CMP-3-deoxy-D-manno-octulosonate biosynthesis; CMP-3-deoxy-D-manno-octulosonate from 3-deoxy-D-manno-octulosonate and CTP: step 1/1. The protein operates within bacterial outer membrane biogenesis; lipopolysaccharide biosynthesis. Functionally, activates KDO (a required 8-carbon sugar) for incorporation into bacterial lipopolysaccharide in Gram-negative bacteria. In Parvibaculum lavamentivorans (strain DS-1 / DSM 13023 / NCIMB 13966), this protein is 3-deoxy-manno-octulosonate cytidylyltransferase.